A 215-amino-acid chain; its full sequence is S-crystallin 4 (215 aa).

One can recognise a GST N-terminal domain in the interval 2–80 (PSYTLHYFNH…YLAREFGFHG (79 aa)). The 134-residue stretch at 82–215 (NNMDMARVDY…YLQKRSRTEF (134 aa)) folds into the GST C-terminal domain.

Belongs to the GST superfamily. Lens.

Functionally, S-crystallins are structural components of squids and octopi eye lens. Contains relatively little if any GST activity. This is S-crystallin 4 from Enteroctopus dofleini (North Pacific giant octopus).